The chain runs to 281 residues: Transcription factor E2F6 (281 aa).

Residue Lys9 forms a Glycyl lysine isopeptide (Lys-Gly) (interchain with G-Cter in SUMO2) linkage. The DNA-binding element occupies 50-129 (YVSMRKALKV…SKNHIRWIGS (80 aa)). A DEF box motif is present at residues 95–129 (KLGVRKRRVYDITNVLDGIDLVEKKSKNHIRWIGS). The tract at residues 130 to 222 (DLSNFGAVPQ…PAPREDSITV (93 aa)) is dimerization. Residues 143 to 164 (LQEELSDLSAMEDALDELIKDC) are leucine-zipper. Residues 173 to 281 (DDKENERLAY…QSEELLEVSN (109 aa)) are transcription repression. The disordered stretch occupies residues 241–281 (GQTSNKRSEGVGTSSSESTHPEGPEEEENPQQSEELLEVSN).

This sequence belongs to the E2F/DP family. As to quaternary structure, forms heterodimers with DP family members TFDP1 or TFDP2. Component of the DRTF1/E2F transcription factor complex. Part of the E2F6.com-1 complex in G0 phase composed of E2F6, MGA, MAX, TFDP1, CBX3, BAT8, EUHMTASE1, RING1, RNF2, MBLR, L3MBTL2 and YAF2. Component of some MLL1/MLL complex, at least composed of the core components KMT2A/MLL1, ASH2L, HCFC1/HCF1, WDR5 and RBBP5, as well as the facultative components BACC1, CHD8, E2F6, HSP70, INO80C, KANSL1, LAS1L, MAX, MCRS1, MGA, KAT8/MOF, PELP1, PHF20, PRP31, RING2, RUVB1/TIP49A, RUVB2/TIP49B, SENP3, TAF1, TAF4, TAF6, TAF7, TAF9 and TEX10. Expressed in all tissues examined. Highest levels in placenta, skeletal muscle, heart, ovary, kidney, small intestine and spleen.

It is found in the nucleus. Functionally, inhibitor of E2F-dependent transcription. Binds DNA cooperatively with DP proteins through the E2 recognition site, 5'-TTTC[CG]CGC-3'. Has a preference for the 5'-TTTCCCGC-3' E2F recognition site. E2F6 lacks the transcriptional activation and pocket protein binding domains. Appears to regulate a subset of E2F-dependent genes whose products are required for entry into the cell cycle but not for normal cell cycle progression. Represses expression of some meiosis-specific genes, including SLC25A31/ANT4. May silence expression via the recruitment of a chromatin remodeling complex containing histone H3-K9 methyltransferase activity. Overexpression delays the exit of cells from the S-phase. The polypeptide is Transcription factor E2F6 (Homo sapiens (Human)).